The primary structure comprises 348 residues: Methylthioribose-1-phosphate isomerase (348 aa).

Substrate-binding positions include 48–50 (RGA), Arg-90, and Gln-195. The Proton donor role is filled by Asp-236. 246–247 (NK) serves as a coordination point for substrate.

Belongs to the eIF-2B alpha/beta/delta subunits family. MtnA subfamily.

It catalyses the reaction 5-(methylsulfanyl)-alpha-D-ribose 1-phosphate = 5-(methylsulfanyl)-D-ribulose 1-phosphate. Its pathway is amino-acid biosynthesis; L-methionine biosynthesis via salvage pathway; L-methionine from S-methyl-5-thio-alpha-D-ribose 1-phosphate: step 1/6. Functionally, catalyzes the interconversion of methylthioribose-1-phosphate (MTR-1-P) into methylthioribulose-1-phosphate (MTRu-1-P). The polypeptide is Methylthioribose-1-phosphate isomerase (Exiguobacterium sibiricum (strain DSM 17290 / CCUG 55495 / CIP 109462 / JCM 13490 / 255-15)).